A 1202-amino-acid polypeptide reads, in one-letter code: Phospholipid-transporting ATPase 10 (1202 aa).

Residues 1–73 are Cytoplasmic-facing; that stretch reads MAGPSRRRRR…STKYTVASFF (73 aa). The chain crosses the membrane as a helical span at residues 74–95; that stretch reads PKSLFEQFRRVANFYFLVTGIL. Over 96–99 the chain is Extracellular; sequence SLTD. The helical transmembrane segment at 100-122 threads the bilayer; the sequence is LSPYGAVSALLPLALVISATMVK. The Cytoplasmic segment spans residues 123–305; sequence EGIEDWRRKQ…SRIERTMDKI (183 aa). Residues 306–327 traverse the membrane as a helical segment; that stretch reads IYLMFGLVFLMSFVGSIIFGVE. The Extracellular segment spans residues 328-364; sequence TREDKVKNGRTERWYLKPDDADIFFDPERAPMAAIYH. Residues 365–382 traverse the membrane as a helical segment; sequence FFTATMLYSYFIPISLYV. Residues 383–920 lie on the Cytoplasmic side of the membrane; the sequence is SIEIVKVLQS…HGHWCYSRIA (538 aa). Catalysis depends on aspartate 430, which acts as the 4-aspartylphosphate intermediate. Mg(2+)-binding residues include aspartate 865 and aspartate 869. The chain crosses the membrane as a helical span at residues 921–940; sequence SMICYFFYKNITFGVTVFLY. At 941 to 954 the chain is on the extracellular side; it reads EAYTSFSGQPAYND. The helical transmembrane segment at 955–974 threads the bilayer; it reads WFLSLFNVFFSSLPVIALGV. Residues 975 to 1004 are Cytoplasmic-facing; that stretch reads FDQDVSARFCYKFPLLYQEGVQNILFSWKR. The chain crosses the membrane as a helical span at residues 1005–1027; it reads IIGWMFNGFISALAIFFLCKESL. The Extracellular portion of the chain corresponds to 1028–1040; it reads KHQLFDPDGKTAG. Residues 1041-1063 traverse the membrane as a helical segment; that stretch reads REILGGTMYTCVVWVVNLQMALS. Residues 1064 to 1069 lie on the Cytoplasmic side of the membrane; the sequence is ISYFTW. Residues 1070–1090 form a helical membrane-spanning segment; the sequence is VQHIVIWGSIAFWYIFLMIYG. At 1091–1107 the chain is on the extracellular side; sequence AMTPSFSTDAYMVFLEA. A helical membrane pass occupies residues 1108–1132; it reads LAPAPSYWLTTLFVMIFALIPYFVY. The Cytoplasmic portion of the chain corresponds to 1133–1202; sequence KSVQMRFFPK…DQIYKDLVGV (70 aa).

Belongs to the cation transport ATPase (P-type) (TC 3.A.3) family. Type IV subfamily.

Its subcellular location is the cell membrane. The enzyme catalyses ATP + H2O + phospholipidSide 1 = ADP + phosphate + phospholipidSide 2.. Functionally, involved in transport of phospholipids. The protein is Phospholipid-transporting ATPase 10 of Arabidopsis thaliana (Mouse-ear cress).